Consider the following 396-residue polypeptide: Acetate kinase (396 aa).

Asn-7 is a binding site for Mg(2+). Lys-14 contributes to the ATP binding site. Arg-91 lines the substrate pocket. The active-site Proton donor/acceptor is Asp-148. ATP-binding positions include 208–212 (HLGNG), 283–285 (DFR), and 331–335 (GIGEN). Glu-384 is a binding site for Mg(2+).

Belongs to the acetokinase family. As to quaternary structure, homodimer. It depends on Mg(2+) as a cofactor. The cofactor is Mn(2+).

It is found in the cytoplasm. The catalysed reaction is acetate + ATP = acetyl phosphate + ADP. Its pathway is metabolic intermediate biosynthesis; acetyl-CoA biosynthesis; acetyl-CoA from acetate: step 1/2. Its function is as follows. Catalyzes the formation of acetyl phosphate from acetate and ATP. Can also catalyze the reverse reaction. This is Acetate kinase from Desulforamulus reducens (strain ATCC BAA-1160 / DSM 100696 / MI-1) (Desulfotomaculum reducens).